The following is a 347-amino-acid chain: Transcription termination/antitermination protein NusA (347 aa).

Positions 112 to 184 constitute an S1 motif domain; sequence GEIVAGVIQR…REPLITLSRT (73 aa). The KH domain occupies 287–347; that stretch reads ARAARVVVPD…GVSRGMAHDR (61 aa). Residues 322–347 are disordered; that stretch reads DIRGDAPPPPPGQPEPGVSRGMAHDR.

Belongs to the NusA family. As to quaternary structure, monomer. Binds directly to the core enzyme of the DNA-dependent RNA polymerase and to nascent RNA.

The protein resides in the cytoplasm. Functionally, participates in both transcription termination and antitermination. The chain is Transcription termination/antitermination protein NusA from Mycobacterium bovis (strain ATCC BAA-935 / AF2122/97).